We begin with the raw amino-acid sequence, 236 residues long: Enolase-phosphatase E1 (236 aa).

This sequence belongs to the HAD-like hydrolase superfamily. MasA/MtnC family. Monomer. Requires Mg(2+) as cofactor.

The enzyme catalyses 5-methylsulfanyl-2,3-dioxopentyl phosphate + H2O = 1,2-dihydroxy-5-(methylsulfanyl)pent-1-en-3-one + phosphate. It participates in amino-acid biosynthesis; L-methionine biosynthesis via salvage pathway; L-methionine from S-methyl-5-thio-alpha-D-ribose 1-phosphate: step 3/6. It functions in the pathway amino-acid biosynthesis; L-methionine biosynthesis via salvage pathway; L-methionine from S-methyl-5-thio-alpha-D-ribose 1-phosphate: step 4/6. In terms of biological role, bifunctional enzyme that catalyzes the enolization of 2,3-diketo-5-methylthiopentyl-1-phosphate (DK-MTP-1-P) into the intermediate 2-hydroxy-3-keto-5-methylthiopentenyl-1-phosphate (HK-MTPenyl-1-P), which is then dephosphorylated to form the acireductone 1,2-dihydroxy-3-keto-5-methylthiopentene (DHK-MTPene). The sequence is that of Enolase-phosphatase E1 from Frankia alni (strain DSM 45986 / CECT 9034 / ACN14a).